The sequence spans 345 residues: UPF0228 protein MA_2656 (345 aa).

This sequence belongs to the UPF0228 family.

The sequence is that of UPF0228 protein MA_2656 from Methanosarcina acetivorans (strain ATCC 35395 / DSM 2834 / JCM 12185 / C2A).